A 467-amino-acid chain; its full sequence is MTKVASIVDVLQGKIAIGETVTVRGWIRTRRDSKAGLSFLAIYDGSCFDPIQAIVNNDIENYETEVLRLTTGCSVIVTGTVVESPAEGQAVELQAEKVEVAGWVEDPETYPMAAKRHSIEYLREVAHLRPRTNIIGAVARVRHCLAQAIHRFFHEQGFYWVATPLITASDTEGAGEMFRVSTLDLENLPRDDKGAVDFSQDFFGKESFLTVSGQLNGETYACALSKIYTFGPTFRAENSNTTRHLAEFWMVEPEIAFATLADNAKLAEDMLKYVFRAVLEERKDDLKFFEKHVDNDVISRLENFINSDFAQIDYTDAIEVLLQSGKKFEFPVSWGIDLSSEHERYLAEEHFKSPVVVKNYPKDIKAFYMRLNDDGKTVAAMDVLAPGIGEIIGGSQREERLDVLDKRMIEMGLNPEDYWWYRDLRRYGTVPHAGFGLGFERLIVYVTGVQNIRDVIPFPRSPRNANF.

Belongs to the class-II aminoacyl-tRNA synthetase family. As to quaternary structure, homodimer.

The protein resides in the cytoplasm. The catalysed reaction is tRNA(Asn) + L-asparagine + ATP = L-asparaginyl-tRNA(Asn) + AMP + diphosphate + H(+). In Pasteurella multocida (strain Pm70), this protein is Asparagine--tRNA ligase.